The following is a 497-amino-acid chain: Methionine--tRNA ligase (497 aa).

The short motif at 14 to 24 (YYVNDVPHLGH) is the 'HIGH' region element. The Zn(2+) site is built by Cys129, Cys132, Cys147, and His150. The 'KMSKS' region motif lies at 295-299 (KMSKT). Lys298 contributes to the ATP binding site.

This sequence belongs to the class-I aminoacyl-tRNA synthetase family. MetG type 2A subfamily. Monomer. The cofactor is Zn(2+).

The protein resides in the cytoplasm. It catalyses the reaction tRNA(Met) + L-methionine + ATP = L-methionyl-tRNA(Met) + AMP + diphosphate. In terms of biological role, is required not only for elongation of protein synthesis but also for the initiation of all mRNA translation through initiator tRNA(fMet) aminoacylation. This chain is Methionine--tRNA ligase (metG), found in Aquifex aeolicus (strain VF5).